We begin with the raw amino-acid sequence, 435 residues long: Serine--tRNA ligase (435 aa).

Residue 239 to 241 (TAE) participates in L-serine binding. ATP is bound at residue 270-272 (RAE). An L-serine-binding site is contributed by Glu-293. ATP is bound at residue 357–360 (EISS). Ser-393 serves as a coordination point for L-serine.

This sequence belongs to the class-II aminoacyl-tRNA synthetase family. Type-1 seryl-tRNA synthetase subfamily. Homodimer. The tRNA molecule binds across the dimer.

The protein localises to the cytoplasm. It carries out the reaction tRNA(Ser) + L-serine + ATP = L-seryl-tRNA(Ser) + AMP + diphosphate + H(+). The catalysed reaction is tRNA(Sec) + L-serine + ATP = L-seryl-tRNA(Sec) + AMP + diphosphate + H(+). It functions in the pathway aminoacyl-tRNA biosynthesis; selenocysteinyl-tRNA(Sec) biosynthesis; L-seryl-tRNA(Sec) from L-serine and tRNA(Sec): step 1/1. Its function is as follows. Catalyzes the attachment of serine to tRNA(Ser). Is also able to aminoacylate tRNA(Sec) with serine, to form the misacylated tRNA L-seryl-tRNA(Sec), which will be further converted into selenocysteinyl-tRNA(Sec). This chain is Serine--tRNA ligase, found in Parvibaculum lavamentivorans (strain DS-1 / DSM 13023 / NCIMB 13966).